The chain runs to 114 residues: Large ribosomal subunit protein bL20 (114 aa).

It belongs to the bacterial ribosomal protein bL20 family.

In terms of biological role, binds directly to 23S ribosomal RNA and is necessary for the in vitro assembly process of the 50S ribosomal subunit. It is not involved in the protein synthesizing functions of that subunit. This chain is Large ribosomal subunit protein bL20, found in Amoebophilus asiaticus (strain 5a2).